We begin with the raw amino-acid sequence, 137 residues long: Cell division protein SepF (137 aa).

It belongs to the SepF family. In terms of assembly, homodimer. Interacts with FtsZ.

It localises to the cytoplasm. In terms of biological role, cell division protein that is part of the divisome complex and is recruited early to the Z-ring. Probably stimulates Z-ring formation, perhaps through the cross-linking of FtsZ protofilaments. Its function overlaps with FtsA. This chain is Cell division protein SepF, found in Carboxydothermus hydrogenoformans (strain ATCC BAA-161 / DSM 6008 / Z-2901).